A 119-amino-acid chain; its full sequence is Large ribosomal subunit protein bL20 (119 aa).

It belongs to the bacterial ribosomal protein bL20 family.

Binds directly to 23S ribosomal RNA and is necessary for the in vitro assembly process of the 50S ribosomal subunit. It is not involved in the protein synthesizing functions of that subunit. The sequence is that of Large ribosomal subunit protein bL20 from Shewanella frigidimarina (strain NCIMB 400).